Consider the following 391-residue polypeptide: Processive diacylglycerol beta-glucosyltransferase (391 aa).

Belongs to the glycosyltransferase 28 family. UgtP subfamily.

The protein localises to the cell membrane. It carries out the reaction a 1,2-diacyl-3-O-(beta-D-glucopyranosyl)-sn-glycerol + UDP-alpha-D-glucose = a 1,2-diacyl-3-O-(beta-D-Glc-(1-&gt;6)-beta-D-Glc)-sn-glycerol + UDP + H(+). The enzyme catalyses a 1,2-diacyl-sn-glycerol + UDP-alpha-D-glucose = a 1,2-diacyl-3-O-(beta-D-glucopyranosyl)-sn-glycerol + UDP + H(+). It functions in the pathway glycolipid metabolism; diglucosyl-diacylglycerol biosynthesis. Its function is as follows. Processive glucosyltransferase involved in the biosynthesis of both the bilayer- and non-bilayer-forming membrane glucolipids. Is able to successively transfer two glucosyl residues to diacylglycerol (DAG), thereby catalyzing the formation of beta-monoglucosyl-DAG (3-O-(beta-D-glucopyranosyl)-1,2-diacyl-sn-glycerol) and beta-diglucosyl-DAG (3-O-(beta-D-glucopyranosyl-beta-(1-&gt;6)-D-glucopyranosyl)-1,2-diacyl-sn-glycerol). Beta-diglucosyl-DAG is the predominant glycolipid found in Bacillales and is also used as a membrane anchor for lipoteichoic acid (LTA). This Staphylococcus aureus (strain bovine RF122 / ET3-1) protein is Processive diacylglycerol beta-glucosyltransferase.